A 76-amino-acid polypeptide reads, in one-letter code: DNA-directed RNA polymerase subunit Rpo10 (76 aa).

Residues Cys-16, Cys-19, Cys-53, and Cys-54 each contribute to the Zn(2+) site.

It belongs to the archaeal Rpo10/eukaryotic RPB10 RNA polymerase subunit family. In terms of assembly, part of the RNA polymerase complex. Zn(2+) serves as cofactor.

It is found in the cytoplasm. The enzyme catalyses RNA(n) + a ribonucleoside 5'-triphosphate = RNA(n+1) + diphosphate. DNA-dependent RNA polymerase (RNAP) catalyzes the transcription of DNA into RNA using the four ribonucleoside triphosphates as substrates. In Archaeoglobus fulgidus (strain ATCC 49558 / DSM 4304 / JCM 9628 / NBRC 100126 / VC-16), this protein is DNA-directed RNA polymerase subunit Rpo10.